Here is a 311-residue protein sequence, read N- to C-terminus: MALPILLDCDPGHDDAIAIVLALASPELDVKAITSSAGNQTPEKTLRNVLRMLTLLNRTDIPVAGGAVKPLMRELIIADNVHGESGLDGPALPEPTFAPQNCTAVELMAKTLRESAEPVTIVSTGPQTNVALLLNSHPELHSKIARIVIMGGAMGLGNWTPAAEFNIYVDPEAAEIVFQSGIPVVMAGLDVTHKAQIHVEDTERFRAIGNPVSTIVAELLDFFLEYHKDEKWGFVGAPLHDPCTIAWLLKPELFTSVERWVGVETQGKYTQGMTVVDYYYLTGNKPNATVMVDVDRQGFVDLLADRLKFYA.

Residue His-240 is part of the active site.

Belongs to the IUNH family. RihA subfamily.

Functionally, hydrolyzes with equal efficiency cytidine or uridine to ribose and cytosine or uracil, respectively. The chain is Pyrimidine-specific ribonucleoside hydrolase RihA from Escherichia coli (strain K12 / MC4100 / BW2952).